Reading from the N-terminus, the 402-residue chain is MSPKSKSTNKTYTIVIKLGTSSICDEKTHEPLISNLSLIVETVVKLRKLGHNVVLVSSGGIAMGLRRLDLPKRPSKLSAVQAIAAVGQGRLISLWDTLFTQLRQPIAQVLITRNDIAERSQYVNAANTISELLHFGVVPIVNENDTLSVQEIRFGDNDTLSAITAGMINADYLFLLTDVDCLYTDNPRTNPDAKPILKIHDTSMVNANVSTPGSGVGTGGMKTKLIAADLGTSSGVNVIICRGSKPSSIFDIIRQESSDNKNESVELPLHTHFVAKKQGRIRDRHFWLLHGLKSHGSLEIDRGAFEAITRTNRAGLLPVGVTKVHGHFSAHQAVTVIYNGEEIGRALVNYSSTEIDLIKGKRSKEIASILGYNETEYVAYRDYLVVHGLNSHHDSQVSSDEH.

Residues Ser58, Asp145, and Asn157 each coordinate substrate. ATP is bound by residues 177 to 178 (TD) and 218 to 224 (TGGMKTK). The region spanning 295 to 373 (HGSLEIDRGA…KEIASILGYN (79 aa)) is the PUA domain.

The protein belongs to the glutamate 5-kinase family.

The protein resides in the cytoplasm. The enzyme catalyses L-glutamate + ATP = L-glutamyl 5-phosphate + ADP. Its pathway is amino-acid biosynthesis; L-proline biosynthesis; L-glutamate 5-semialdehyde from L-glutamate: step 1/2. Its function is as follows. Catalyzes the transfer of a phosphate group to glutamate to form glutamate 5-phosphate which rapidly cyclizes to 5-oxoproline. This Schizosaccharomyces pombe (strain 972 / ATCC 24843) (Fission yeast) protein is Probable glutamate 5-kinase.